The following is a 346-amino-acid chain: Superficial pseudohyphal growth protein 1 (346 aa).

Residues 289 to 308 (NFGEDEDNEEDNEDDLPDAA) are disordered. A compositionally biased stretch (acidic residues) spans 291–305 (GEDEDNEEDNEDDLP).

The protein resides in the nucleus. Its function is as follows. Probable transcription factor required for superficial pseudohyphal development in response to nitrogen starvation. This chain is Superficial pseudohyphal growth protein 1 (SFG1), found in Saccharomyces cerevisiae (strain ATCC 204508 / S288c) (Baker's yeast).